We begin with the raw amino-acid sequence, 221 residues long: Transcription factor MYB1 (221 aa).

2 HTH myb-type domains span residues 1–57 (MESV…LNYL) and 58–112 (RPNI…QKKL). 2 DNA-binding regions (H-T-H motif) span residues 33–57 (WHQV…LNYL) and 85–108 (WSLI…NTHL). The tract at residues 126–154 (KTIVPKGTEAQPRAHPKSPPRPSPPSNNE) is disordered.

Expressed in stems and leaves. Expressed at low levels in ovaries.

The protein localises to the nucleus. Transcription activator involved in the regulation of anthocyanin biosynthesis in red-fleshed kiwifruit varieties. Activates the transcription of genes involved in anthocyanin biosynthesis, such as dihydroflavonol reductase (DFR), anthocyanidin synthase (ANS) and UDP flavonoid glycosyltransferase (UFGT). In Actinidia chinensis var. chinensis (Chinese soft-hair kiwi), this protein is Transcription factor MYB1.